A 692-amino-acid chain; its full sequence is Elongation factor G (692 aa).

The tr-type G domain occupies 8–282 (EKTRNIGIMA…AVLDYLPAPT (275 aa)). GTP is bound by residues 17–24 (AHIDAGKT), 81–85 (DTPGH), and 135–138 (NKMD).

This sequence belongs to the TRAFAC class translation factor GTPase superfamily. Classic translation factor GTPase family. EF-G/EF-2 subfamily.

Its subcellular location is the cytoplasm. Functionally, catalyzes the GTP-dependent ribosomal translocation step during translation elongation. During this step, the ribosome changes from the pre-translocational (PRE) to the post-translocational (POST) state as the newly formed A-site-bound peptidyl-tRNA and P-site-bound deacylated tRNA move to the P and E sites, respectively. Catalyzes the coordinated movement of the two tRNA molecules, the mRNA and conformational changes in the ribosome. The protein is Elongation factor G of Bacillus licheniformis (strain ATCC 14580 / DSM 13 / JCM 2505 / CCUG 7422 / NBRC 12200 / NCIMB 9375 / NCTC 10341 / NRRL NRS-1264 / Gibson 46).